A 234-amino-acid polypeptide reads, in one-letter code: Endo-1,4-beta-xylanase 1 (234 aa).

Positions 1-21 (MVSFIFTRIILFAAAINGAVA) are cleaved as a signal peptide. N-linked (GlcNAc...) asparagine glycosylation is found at Asn25 and Asn75. The 197-residue stretch at 38–234 (SGTPSSTGYS…SSGFSSITVA (197 aa)) folds into the GH11 domain. The Nucleophile role is filled by Glu124. Residue Asn167 is glycosylated (N-linked (GlcNAc...) asparagine). Catalysis depends on Glu221, which acts as the Proton donor.

It belongs to the glycosyl hydrolase 11 (cellulase G) family.

The protein localises to the secreted. The enzyme catalyses Endohydrolysis of (1-&gt;4)-beta-D-xylosidic linkages in xylans.. It participates in glycan degradation; xylan degradation. Its function is as follows. Endo-1,4-beta-xylanase involved in the hydrolysis of xylan, a major structural heterogeneous polysaccharide found in plant biomass representing the second most abundant polysaccharide in the biosphere, after cellulose. The polypeptide is Endo-1,4-beta-xylanase 1 (Xyn1) (Leucoagaricus gongylophorus (Leaf-cutting ant fungus)).